Consider the following 310-residue polypeptide: tRNA-cytidine(32) 2-sulfurtransferase (310 aa).

A PP-loop motif motif is present at residues S45 to S50. [4Fe-4S] cluster contacts are provided by C120, C123, and C211.

Belongs to the TtcA family. In terms of assembly, homodimer. Requires Mg(2+) as cofactor. The cofactor is [4Fe-4S] cluster.

Its subcellular location is the cytoplasm. It carries out the reaction cytidine(32) in tRNA + S-sulfanyl-L-cysteinyl-[cysteine desulfurase] + AH2 + ATP = 2-thiocytidine(32) in tRNA + L-cysteinyl-[cysteine desulfurase] + A + AMP + diphosphate + H(+). The protein operates within tRNA modification. Catalyzes the ATP-dependent 2-thiolation of cytidine in position 32 of tRNA, to form 2-thiocytidine (s(2)C32). The sulfur atoms are provided by the cysteine/cysteine desulfurase (IscS) system. This Shewanella baltica (strain OS195) protein is tRNA-cytidine(32) 2-sulfurtransferase.